We begin with the raw amino-acid sequence, 266 residues long: uncharacterized protein (266 aa).

The helical transmembrane segment at 12–28 threads the bilayer; sequence ILAAGLAIGCAGGYYAY. Positions 40 to 140 constitute an FAD-binding FR-type domain; that stretch reads EIYAPFTVNK…RGPFKTTKLD (101 aa).

This sequence belongs to the flavoprotein pyridine nucleotide cytochrome reductase family. It depends on FAD as a cofactor.

It localises to the mitochondrion outer membrane. This is an uncharacterized protein from Schizosaccharomyces pombe (strain 972 / ATCC 24843) (Fission yeast).